The sequence spans 244 residues: MTSEKSQVLFPGAAPQVTTDLSNNVVLTTVNDLYNWAKMSSLWPLLYGTACCFIEFAAMLGSRFDFDRFGLLPRSSPRTADLIITAGTVTMKMAPALVKLYQQMAEPKYVIAMGACTISGGMFSSDSYTAVRGVDKLIPVDVYIPGCPPRPEAIMDAIVKLRKKIAAEDMRERGRLQQTHRYYTVKHNLKPVPEIITGKYLESETRQAPPPELAAAIGLPVPPALQTADFKQAEQQLKALQGGV.

4 residues coordinate [4Fe-4S] cluster: Cys51, Cys52, Cys116, and Cys147.

The protein belongs to the complex I 20 kDa subunit family. As to quaternary structure, NDH-1 can be composed of about 15 different subunits; different subcomplexes with different compositions have been identified which probably have different functions. The cofactor is [4Fe-4S] cluster.

The protein localises to the cellular thylakoid membrane. It carries out the reaction a plastoquinone + NADH + (n+1) H(+)(in) = a plastoquinol + NAD(+) + n H(+)(out). It catalyses the reaction a plastoquinone + NADPH + (n+1) H(+)(in) = a plastoquinol + NADP(+) + n H(+)(out). Functionally, NDH-1 shuttles electrons from an unknown electron donor, via FMN and iron-sulfur (Fe-S) centers, to quinones in the respiratory and/or the photosynthetic chain. The immediate electron acceptor for the enzyme in this species is believed to be plastoquinone. Couples the redox reaction to proton translocation, and thus conserves the redox energy in a proton gradient. Cyanobacterial NDH-1 also plays a role in inorganic carbon-concentration. This chain is NAD(P)H-quinone oxidoreductase subunit K, found in Synechococcus sp. (strain JA-2-3B'a(2-13)) (Cyanobacteria bacterium Yellowstone B-Prime).